We begin with the raw amino-acid sequence, 360 residues long: DNA polymerase IV (360 aa).

One can recognise a UmuC domain in the interval 6–187 (IIHVDMDAFY…LKIGDLHGVG (182 aa)). D10 and D105 together coordinate Mg(2+). The active site involves E106.

The protein belongs to the DNA polymerase type-Y family. Monomer. Mg(2+) is required as a cofactor.

Its subcellular location is the cytoplasm. It catalyses the reaction DNA(n) + a 2'-deoxyribonucleoside 5'-triphosphate = DNA(n+1) + diphosphate. Poorly processive, error-prone DNA polymerase involved in untargeted mutagenesis. Copies undamaged DNA at stalled replication forks, which arise in vivo from mismatched or misaligned primer ends. These misaligned primers can be extended by PolIV. Exhibits no 3'-5' exonuclease (proofreading) activity. May be involved in translesional synthesis, in conjunction with the beta clamp from PolIII. The polypeptide is DNA polymerase IV (Exiguobacterium sibiricum (strain DSM 17290 / CCUG 55495 / CIP 109462 / JCM 13490 / 255-15)).